The primary structure comprises 259 residues: Thiamine thiazole synthase (259 aa).

NAD(+)-binding positions include Ala33, 52-53 (ER), Gly60, Val124, and 152-154 (HVD). Positions 154 and 169 each coordinate Fe cation. Residue Met219 participates in NAD(+) binding. Arg229 provides a ligand contact to glycine.

It belongs to the THI4 family. As to quaternary structure, homooctamer; tetramer of dimers. It depends on Fe(2+) as a cofactor.

The enzyme catalyses hydrogen sulfide + glycine + NAD(+) = ADP-5-ethyl-4-methylthiazole-2-carboxylate + nicotinamide + 3 H2O + H(+). It functions in the pathway cofactor biosynthesis; thiamine diphosphate biosynthesis. Its function is as follows. Involved in the biosynthesis of the thiazole moiety of thiamine. Catalyzes the conversion of NAD and glycine to adenosine diphosphate 5-(2-hydroxyethyl)-4-methylthiazole-2-carboxylate (ADT), an adenylated thiazole intermediate, using free sulfide as a source of sulfur. The protein is Thiamine thiazole synthase of Pyrobaculum neutrophilum (strain DSM 2338 / JCM 9278 / NBRC 100436 / V24Sta) (Thermoproteus neutrophilus).